Reading from the N-terminus, the 280-residue chain is Pre-mRNA-splicing factor PRP21 (280 aa).

The SURP motif 1 repeat unit spans residues 11-49 (DIKTTVNYIKQHGVEFENKLLEDERFSFIKKDDPLHEYY). A disordered region spans residues 53 to 72 (MNEPTDTVSGEDNDRKSERE). The stretch at 95 to 135 (VIKLTARYYAKDKSIVEQMISKDGEARLNFMNSSHPLHKTF) is one SURP motif 2 repeat. Basic and acidic residues-rich tracts occupy residues 246–261 (EKIV…GDSK) and 269–280 (AVGETRLKKSKK). Residues 246 to 280 (EKIVSDQGKQKGGDSKGKKRKIRAVGETRLKKSKK) are disordered.

As to quaternary structure, belongs to the CWC complex (or CEF1-associated complex), a spliceosome sub-complex reminiscent of a late-stage spliceosome composed of the U2, U5 and U6 snRNAs and at least BUD13, BUD31, BRR2, CDC40, CEF1, CLF1, CUS1, CWC2, CWC15, CWC21, CWC22, CWC23, CWC24, CWC25, CWC27, ECM2, HSH155, IST3, ISY1, LEA1, MSL1, NTC20, PRP8, PRP9, PRP11, PRP19, PRP21, PRP22, PRP45, PRP46, SLU7, SMB1, SMD1, SMD2, SMD3, SMX2, SMX3, SNT309, SNU114, SPP2, SYF1, SYF2, RSE1 and YJU2.

It localises to the nucleus. In terms of biological role, mRNA splicing factors, PRP9, PRP11, and PRP21, are necessary for binding of the U2 snRNP to the pre-mRNA in an early step of spliceosome assembly. In Saccharomyces cerevisiae (strain ATCC 204508 / S288c) (Baker's yeast), this protein is Pre-mRNA-splicing factor PRP21 (PRP21).